The chain runs to 132 residues: L-ectoine synthase (132 aa).

This sequence belongs to the ectoine synthase family.

The enzyme catalyses (2S)-4-acetamido-2-aminobutanoate = L-ectoine + H2O. It participates in amine and polyamine biosynthesis; ectoine biosynthesis; L-ectoine from L-aspartate 4-semialdehyde: step 3/3. Its function is as follows. Catalyzes the circularization of gamma-N-acetyl-alpha,gamma-diaminobutyric acid (ADABA) to ectoine (1,4,5,6-tetrahydro-2-methyl-4-pyrimidine carboxylic acid), which is an excellent osmoprotectant. This is L-ectoine synthase from Hahella chejuensis (strain KCTC 2396).